Reading from the N-terminus, the 341-residue chain is Pre-mRNA-processing protein 45 (341 aa).

3 disordered regions span residues M1–S31, N181–A226, and E302–Y341. Residues F192–N201 show a composition bias toward basic residues. Basic and acidic residues predominate over residues E302 to R318.

Belongs to the SNW family. As to quaternary structure, associated with the spliceosome.

Its subcellular location is the nucleus. Its function is as follows. Involved in pre-mRNA splicing. The protein is Pre-mRNA-processing protein 45 (PRP45) of Debaryomyces hansenii (strain ATCC 36239 / CBS 767 / BCRC 21394 / JCM 1990 / NBRC 0083 / IGC 2968) (Yeast).